Reading from the N-terminus, the 2321-residue chain is Major viral transcription factor ICP4 homolog (2321 aa).

Disordered stretches follow at residues 19–183 (GIFP…SPPL), 296–329 (ILHTNSPTPPTSTSPAPIPSPTQPPACLPSPAPI), 350–438 (EFIQ…PSLG), 954–1180 (MDDD…SGLA), 1360–1392 (DNSSETEKGISSKPSTSPSVLITTSTQTTAPPH), 1597–1841 (LLND…PSCY), and 2277–2321 (QHEE…TFTD). Low complexity predominate over residues 114–147 (SSNRPGGRNSSNGADESGESSSDRSPSYSPCDSY). Composition is skewed to pro residues over residues 302 to 329 (PTPPTSTSPAPIPSPTQPPACLPSPAPI) and 355 to 367 (QSPPSPPQAPSPP). A compositionally biased stretch (low complexity) spans 368–389 (AHSSSSCSPSHLAPSPLSSSPL). A compositionally biased stretch (pro residues) spans 390–410 (SSPPQLSPAPVSPPSSPPPLS). 2 stretches are compositionally biased toward polar residues: residues 424–433 (SISSQPQSCP) and 1002–1011 (PRLTTPSSGR). Residues 1031–1093 (PETSPSNEHI…PSSPSSSRSP (63 aa)) are compositionally biased toward low complexity. Basic residues predominate over residues 1151-1161 (GGGRPRGRPPK). 2 stretches are compositionally biased toward polar residues: residues 1169–1180 (NDIQVTSSSGLA) and 1371–1389 (SKPSTSPSVLITTSTQTTA). The span at 1630–1644 (STSSSQSASDKSPIK) shows a compositional bias: low complexity. Composition is skewed to polar residues over residues 1720 to 1743 (KAQTDETLPETSTAHPSAMDQSSS) and 1801 to 1816 (VGQTLLDPTTTTHDIL). Low complexity predominate over residues 1817–1839 (SSSLPNRSCSSSPSPSKRPYHPS).

It belongs to the herpesviridae ICP4 family. A long stretch of serine residues may be a major site of phosphorylation.

It localises to the host nucleus. Its function is as follows. This IE protein is a multifunctional protein capable of migrating to the nucleus, binding to DNA, trans-activating other viral genes, and autoregulating its own synthesis. It is required for the switch from immediate-early to early mode of gene expression. This is Major viral transcription factor ICP4 homolog (MDV084) from Gallus gallus (Chicken).